The following is a 311-amino-acid chain: ATP synthase gamma chain (311 aa).

This sequence belongs to the ATPase gamma chain family. F-type ATPases have 2 components, CF(1) - the catalytic core - and CF(0) - the membrane proton channel. CF(1) has five subunits: alpha(3), beta(3), gamma(1), delta(1), epsilon(1). CF(0) has three main subunits: a, b and c.

Its subcellular location is the cell membrane. In terms of biological role, produces ATP from ADP in the presence of a proton gradient across the membrane. The gamma chain is believed to be important in regulating ATPase activity and the flow of protons through the CF(0) complex. The protein is ATP synthase gamma chain of Limosilactobacillus fermentum (strain NBRC 3956 / LMG 18251) (Lactobacillus fermentum).